Consider the following 126-residue polypeptide: Arginine decarboxylase proenzyme (126 aa).

The Schiff-base intermediate with substrate; via pyruvic acid role is filled by Ser-74. Ser-74 bears the Pyruvic acid (Ser); by autocatalysis mark. His-79 acts as the Proton acceptor; for processing activity in catalysis. The active-site Proton donor; for catalytic activity is Cys-94.

The protein belongs to the prokaryotic AdoMetDC family. Type 1 subfamily. In terms of assembly, heterooctamer of four alpha and four beta chains arranged as a tetramer of alpha/beta heterodimers. The cofactor is pyruvate. Post-translationally, is synthesized initially as an inactive proenzyme. Formation of the active enzyme involves a self-maturation process in which the active site pyruvoyl group is generated from an internal serine residue via an autocatalytic post-translational modification. Two non-identical subunits are generated from the proenzyme in this reaction, and the pyruvate is formed at the N-terminus of the alpha chain, which is derived from the carboxyl end of the proenzyme. The post-translation cleavage follows an unusual pathway, termed non-hydrolytic serinolysis, in which the side chain hydroxyl group of the serine supplies its oxygen atom to form the C-terminus of the beta chain, while the remainder of the serine residue undergoes an oxidative deamination to produce ammonia and the pyruvoyl group blocking the N-terminus of the alpha chain.

It carries out the reaction L-arginine + H(+) = agmatine + CO2. The protein operates within amine and polyamine biosynthesis; agmatine biosynthesis; agmatine from L-arginine: step 1/1. Specifically catalyzes the decarboxylation of L-arginine to agmatine. Has no S-adenosylmethionine decarboxylase (AdoMetDC) activity. The chain is Arginine decarboxylase proenzyme from Pyrobaculum islandicum (strain DSM 4184 / JCM 9189 / GEO3).